The chain runs to 469 residues: Uronate isomerase (469 aa).

It belongs to the metallo-dependent hydrolases superfamily. Uronate isomerase family.

The enzyme catalyses D-glucuronate = D-fructuronate. It carries out the reaction aldehydo-D-galacturonate = keto-D-tagaturonate. It participates in carbohydrate metabolism; pentose and glucuronate interconversion. The chain is Uronate isomerase from Yersinia pseudotuberculosis serotype O:1b (strain IP 31758).